The sequence spans 362 residues: Patr class I histocompatibility antigen, A-5 alpha chain (362 aa).

The N-terminal stretch at 1 to 24 (MQVTAPRTVLLLLSAALALTETWA) is a signal peptide. The tract at residues 25–114 (GSHSMKYFYT…LRGYYNQSEA (90 aa)) is alpha-1. Residues 25–308 (GSHSMKYFYT…EPSSQSTIPI (284 aa)) are Extracellular-facing. N110 carries N-linked (GlcNAc...) asparagine glycosylation. The segment at 115-206 (GSHIIQRMYG…ENGKETLQRA (92 aa)) is alpha-2. 2 disulfides stabilise this stretch: C125–C188 and C227–C283. The segment at 207-298 (DPPKTHVTHH…GLPKPLTLRW (92 aa)) is alpha-3. Positions 209-295 (PKTHVTHHPI…QHEGLPKPLT (87 aa)) constitute an Ig-like C1-type domain. Positions 299–308 (EPSSQSTIPI) are connecting peptide. Residues 309–332 (VGIVAGLAVLAVVVIGAVVAAVMC) traverse the membrane as a helical segment. The Cytoplasmic segment spans residues 333–362 (RRKSSGGKGGSYSQAASSDSAQGSDVSLTA). The disordered stretch occupies residues 336-362 (SSGGKGGSYSQAASSDSAQGSDVSLTA). S343 is subject to Phosphoserine. Residues 343-362 (SYSQAASSDSAQGSDVSLTA) are compositionally biased toward low complexity. Y344 is modified (phosphotyrosine). Phosphoserine occurs at positions 345, 349, 350, 352, 356, and 359.

It belongs to the MHC class I family. As to quaternary structure, heterodimer of an alpha chain and a beta chain (beta-2-microglobulin).

Its subcellular location is the membrane. Its function is as follows. Involved in the presentation of foreign antigens to the immune system. This is Patr class I histocompatibility antigen, A-5 alpha chain from Pan troglodytes (Chimpanzee).